The chain runs to 198 residues: Protein GrpE (198 aa).

Belongs to the GrpE family. As to quaternary structure, homodimer.

The protein localises to the cytoplasm. Participates actively in the response to hyperosmotic and heat shock by preventing the aggregation of stress-denatured proteins, in association with DnaK and GrpE. It is the nucleotide exchange factor for DnaK and may function as a thermosensor. Unfolded proteins bind initially to DnaJ; upon interaction with the DnaJ-bound protein, DnaK hydrolyzes its bound ATP, resulting in the formation of a stable complex. GrpE releases ADP from DnaK; ATP binding to DnaK triggers the release of the substrate protein, thus completing the reaction cycle. Several rounds of ATP-dependent interactions between DnaJ, DnaK and GrpE are required for fully efficient folding. The polypeptide is Protein GrpE (Actinobacillus pleuropneumoniae serotype 3 (strain JL03)).